We begin with the raw amino-acid sequence, 233 residues long: MAHGRNIRKRTFSDMDTLSDKNIGIHTNSLPKNLLCRRILFKGKISKYSIFNDSLAKDHSSNRSMSIDGLIGKKRPHDISFQNMNSSMPSSTQKKTRILDEEIKDQSSSNENDRDSPVIVTLKPSYMPKTSRITEIIHKMKELNMNRIEDGLSFNKKRSEHDAKNVLLHTMEMEEDCEIEEDIAIDSPYLNTSLSEDDTESIVETDYSEEEKESISETESSSDDESYSLYDSF.

The disordered stretch occupies residues 190-233 (LNTSLSEDDTESIVETDYSEEEKESISETESSSDDESYSLYDSF). The span at 195–212 (SEDDTESIVETDYSEEEK) shows a compositional bias: acidic residues.

Belongs to the asfivirus DP238L family.

This is an uncharacterized protein from Ornithodoros (relapsing fever ticks).